Here is a 337-residue protein sequence, read N- to C-terminus: tRNA-dihydrouridine synthase B (337 aa).

Residues 19 to 21 and Gln73 contribute to the FMN site; that span reads PMA. The active-site Proton donor is Cys103. FMN is bound by residues Lys142, 203-205, and 227-228; these read NGD and GR.

Belongs to the Dus family. DusB subfamily. Requires FMN as cofactor.

The catalysed reaction is a 5,6-dihydrouridine in tRNA + NAD(+) = a uridine in tRNA + NADH + H(+). The enzyme catalyses a 5,6-dihydrouridine in tRNA + NADP(+) = a uridine in tRNA + NADPH + H(+). In terms of biological role, catalyzes the synthesis of 5,6-dihydrouridine (D), a modified base found in the D-loop of most tRNAs, via the reduction of the C5-C6 double bond in target uridines. The protein is tRNA-dihydrouridine synthase B of Pseudomonas syringae pv. tomato (strain ATCC BAA-871 / DC3000).